We begin with the raw amino-acid sequence, 103 residues long: SLC35A4 upstream open reading frame protein (103 aa).

The helical transmembrane segment at 62 to 84 (ASAVLGFAVGTCTGIYAAQAYAV) threads the bilayer.

It is found in the mitochondrion inner membrane. In terms of biological role, required to maintain cellular respiration. This is SLC35A4 upstream open reading frame protein from Homo sapiens (Human).